Reading from the N-terminus, the 534-residue chain is MDAFSGSGLKRKFDDVDVGSSVSNSDDEMSSSDSADSCDSLNPPTTASFTPTSILKRQKQLRRKNVRFDQVTVYYFARRQGFTSVPSQGGSSLGMAQRHNSVRSYTLCEFAQEQEVNHREILREHLKEEKLHAKKMKLTKNGTVESVEADGLTLDDVSDEDIDVENVEVDDYFFLQPLPTKRRRALLRASGVHRIDAEEKQELRAIRLSREECGCDCRLYCDPEACACSQAGIKCQVDRMSFPCGCSRDGCGNMAGRIEFNPIRVRTHYLHTIMKLELESKRQVSRPAAEEEPLPGAQSSQTQDFQEFIAENETAVMHLQSAEELERLKAEEDSSGSSASLDSSMESLGVCILEEPLAVPQELCPGLAAPILIQAQLPPGSSVLCFTENSEHPAASPMSSPSYLNSGPLVYYQVEQRPVVGVKAESGSEEGPASFPKEKDLSVFSLPVTSLVACGPSASAALCKPEVGKTSSLNKLLPEDCGLKEPESEDLHPSWSPSSLPFRTDNEEGCGVQNSQQSEDRTSEDSALELPLAV.

N-acetylmethionine is present on Met1. Disordered stretches follow at residues 1–52 (MDAF…FTPT) and 480–534 (DCGL…PLAV). Residues 31–40 (SSDSADSCDS) are compositionally biased toward low complexity. The span at 42-52 (NPPTTASFTPT) shows a compositional bias: polar residues. The span at 480 to 492 (DCGLKEPESEDLH) shows a compositional bias: basic and acidic residues.

This sequence belongs to the AXUD1 family. In terms of tissue distribution, highest expression detected in thymus, brain and ovary. Low levels detected in naive T-cells.

Its subcellular location is the nucleus. Functionally, binds to the consensus sequence 5'-AGAGTG-3' and has transcriptional activator activity. May play a role in apoptosis. The sequence is that of Cysteine/serine-rich nuclear protein 2 (Csrnp2) from Mus musculus (Mouse).